Reading from the N-terminus, the 1127-residue chain is Caprin-2 (1127 aa).

Positions 67–108 are disordered; that stretch reads YQSPSGHSEEEREGNMKSAKPQVNHSQHGESQRALSPLQSTL. Positions 99–108 are enriched in polar residues; sequence RALSPLQSTL. Coiled-coil stretches lie at residues 129–156 and 194–216; these read LKHK…GEHL and AQKK…KLRT. Disordered stretches follow at residues 382-614, 642-753, and 922-975; these read NKQG…KDPV, DKPS…SSSV, and QCYK…PVDV. Composition is skewed to basic and acidic residues over residues 402-432 and 440-464; these read KRWD…HQEV and EQRK…EISK. 2 stretches are compositionally biased toward polar residues: residues 512–531 and 544–567; these read PKSW…SWTT and TPKS…QISP. Basic and acidic residues predominate over residues 588–597; that stretch reads LNTEPKDVPK. Composition is skewed to polar residues over residues 665–714 and 741–753; these read KEQN…TSET and QGFQ…SSSV. Serine 948 and serine 949 each carry phosphoserine. Residues 956–970 show a composition bias toward polar residues; sequence TFNSGDSGQGDSRSM. One can recognise a C1q domain in the interval 993-1127; that stretch reads PQQMRVAFSA…TFSGYLLYQD (135 aa). 2 residues coordinate Ca(2+): aspartate 1078 and glutamate 1084.

The protein belongs to the caprin family. As to quaternary structure, homotrimer; via C1q domain. Found in a complex with LRP6, CCNY and CDK14 during G2/M stage; CAPRIN2 functions as a scaffold for the complex by binding to CCNY via its N terminus and to CDK14 via its C terminus. Interacts with LRP5. Interacts with LRP6. Detected in all tissues tested with highest levels of expression in brain and spleen.

It is found in the cytoplasm. Its subcellular location is the mitochondrion. The protein resides in the cell membrane. Its function is as follows. Promotes phosphorylation of the Wnt coreceptor LRP6, leading to increased activity of the canonical Wnt signaling pathway. Facilitates constitutive LRP6 phosphorylation by CDK14/CCNY during G2/M stage of the cell cycle, which may potentiate cells for Wnt signaling. May regulate the transport and translation of mRNAs, modulating for instance the expression of proteins involved in synaptic plasticity in neurons. Involved in regulation of growth as erythroblasts shift from a highly proliferative state towards their terminal phase of differentiation. May be involved in apoptosis. The sequence is that of Caprin-2 from Homo sapiens (Human).